We begin with the raw amino-acid sequence, 589 residues long: Glucose starvation modulator protein 1 (589 aa).

The segment at residues 20-48 (CVFCHQKHLQCSNERPCKNCVKRNIGHEC) is a DNA-binding region (zn(2)-C6 fungal-type). Disordered stretches follow at residues 59–90 (LTGN…PSVA), 218–240 (NNSN…NPEP), and 340–362 (ANGQ…PGNG). Residues 80-90 (TPITASSPSVA) are compositionally biased toward polar residues. Positions 347–357 (LLDHNKDDSRK) are enriched in basic and acidic residues. Residues 471–542 (SLLDYKKLVE…FKFFKNIAVN (72 aa)) form the PAS domain.

Belongs to the ERT1/acuK family.

It is found in the nucleus. In terms of biological role, transcription factor which regulates nonfermentable carbon utilization. In Candida tropicalis (strain ATCC MYA-3404 / T1) (Yeast), this protein is Glucose starvation modulator protein 1 (GSM1).